The sequence spans 215 residues: ATP-dependent Clp protease proteolytic subunit (215 aa).

The active-site Nucleophile is Ser111. His136 is a catalytic residue.

Belongs to the peptidase S14 family. As to quaternary structure, fourteen ClpP subunits assemble into 2 heptameric rings which stack back to back to give a disk-like structure with a central cavity, resembling the structure of eukaryotic proteasomes.

The protein localises to the cytoplasm. The catalysed reaction is Hydrolysis of proteins to small peptides in the presence of ATP and magnesium. alpha-casein is the usual test substrate. In the absence of ATP, only oligopeptides shorter than five residues are hydrolyzed (such as succinyl-Leu-Tyr-|-NHMec, and Leu-Tyr-Leu-|-Tyr-Trp, in which cleavage of the -Tyr-|-Leu- and -Tyr-|-Trp bonds also occurs).. Cleaves peptides in various proteins in a process that requires ATP hydrolysis. Has a chymotrypsin-like activity. Plays a major role in the degradation of misfolded proteins. This is ATP-dependent Clp protease proteolytic subunit from Hamiltonella defensa subsp. Acyrthosiphon pisum (strain 5AT).